The chain runs to 545 residues: Chaperonin GroEL (545 aa).

ATP is bound by residues 31-34 (TLGP), 88-92 (DGTTT), G415, 478-480 (NAA), and D494.

This sequence belongs to the chaperonin (HSP60) family. In terms of assembly, forms a cylinder of 14 subunits composed of two heptameric rings stacked back-to-back. Interacts with the co-chaperonin GroES.

Its subcellular location is the cytoplasm. It catalyses the reaction ATP + H2O + a folded polypeptide = ADP + phosphate + an unfolded polypeptide.. Its function is as follows. Together with its co-chaperonin GroES, plays an essential role in assisting protein folding. The GroEL-GroES system forms a nano-cage that allows encapsulation of the non-native substrate proteins and provides a physical environment optimized to promote and accelerate protein folding. This chain is Chaperonin GroEL, found in Streptococcus pyogenes serotype M4 (strain MGAS10750).